Here is a 592-residue protein sequence, read N- to C-terminus: Aspartate--tRNA(Asp/Asn) ligase (592 aa).

L-aspartate is bound at residue Glu182. The tract at residues 206-209 is aspartate; sequence QIFK. L-aspartate is bound at residue Arg228. ATP is bound by residues 228 to 230 and Gln237; that span reads RDE. An L-aspartate-binding site is contributed by His455. Position 489 (Glu489) interacts with ATP. Arg496 provides a ligand contact to L-aspartate. Residue 541–544 coordinates ATP; the sequence is GLDR.

This sequence belongs to the class-II aminoacyl-tRNA synthetase family. Type 1 subfamily. In terms of assembly, homodimer.

The protein resides in the cytoplasm. It carries out the reaction tRNA(Asx) + L-aspartate + ATP = L-aspartyl-tRNA(Asx) + AMP + diphosphate. Aspartyl-tRNA synthetase with relaxed tRNA specificity since it is able to aspartylate not only its cognate tRNA(Asp) but also tRNA(Asn). Reaction proceeds in two steps: L-aspartate is first activated by ATP to form Asp-AMP and then transferred to the acceptor end of tRNA(Asp/Asn). In Thermoanaerobacter sp. (strain X514), this protein is Aspartate--tRNA(Asp/Asn) ligase.